The following is a 216-amino-acid chain: Adenylate kinase (216 aa).

10–15 (GAGKGT) is a binding site for ATP. Positions 30–59 (STGDMLRAAVKAGTPLGLELKKVMDAGQLV) are NMP. AMP contacts are provided by residues T31, R36, 57 to 59 (QLV), 85 to 88 (GFPR), and Q92. Residues 122–159 (GRRVHLASGRTYHIQYNPPKVEGKDDVTGEDLIQRDDD) form an LID region. ATP contacts are provided by residues R123 and 132–133 (TY). Residues R156 and R167 each coordinate AMP. G202 contributes to the ATP binding site.

This sequence belongs to the adenylate kinase family. As to quaternary structure, monomer.

It is found in the cytoplasm. It carries out the reaction AMP + ATP = 2 ADP. It functions in the pathway purine metabolism; AMP biosynthesis via salvage pathway; AMP from ADP: step 1/1. Functionally, catalyzes the reversible transfer of the terminal phosphate group between ATP and AMP. Plays an important role in cellular energy homeostasis and in adenine nucleotide metabolism. The chain is Adenylate kinase from Pseudomonas putida (strain GB-1).